The sequence spans 44 residues: Antimicrobial peptide 1b (44 aa).

One can recognise a Chitin-binding type-1 domain in the interval 1 to 42; that stretch reads AQKCGEQGRGAKCPNCLCCGRYGFCGSTPDYCGVGCQSQCRG. 5 disulfides stabilise this stretch: Cys-4-Cys-19, Cys-13-Cys-25, Cys-16-Cys-43, Cys-18-Cys-32, and Cys-36-Cys-40.

Post-translationally, contains 5 disulfide bonds.

In terms of biological role, binds chitin. Has antifungal activity against F.oxysporum 16/10 (IC(50)=4.1 uM) and B.sorokiniana 6/10 (IC(50)=2.7 uM). Inhibits germination of fungal spores. In Leymus arenarius (Lyme grass), this protein is Antimicrobial peptide 1b.